The primary structure comprises 370 residues: Actin-related protein 2/3 complex subunit 1A (370 aa).

WD repeat units lie at residues 6 to 45 (FLLE…WTKA), 50 to 89 (EHNG…WKPT), 140 to 179 (PIRS…VDEK), 202 to 241 (GTGG…QVST), 244 to 284 (TEFL…TFVS), and 322 to 365 (LHQN…SSIQ).

It belongs to the WD repeat ARPC1 family. Probable component of the Arp2/3 complex in which it may replace ARPC1B.

The protein resides in the cytoplasm. It localises to the cytoskeleton. It is found in the nucleus. In terms of biological role, probably functions as a component of the Arp2/3 complex which is involved in regulation of actin polymerization and together with an activating nucleation-promoting factor (NPF) mediates the formation of branched actin networks. In addition to its role in the cytoplasmic cytoskeleton, the Arp2/3 complex also promotes actin polymerization in the nucleus, thereby regulating gene transcription and repair of damaged DNA. This Rattus norvegicus (Rat) protein is Actin-related protein 2/3 complex subunit 1A (Arpc1a).